Consider the following 369-residue polypeptide: Melanoma-associated antigen 10 (369 aa).

The segment at 1–131 (MPRAPKRQRC…VLPDSESLPR (131 aa)) is disordered. Positions 39–62 (SSSTSTSSSFPSSFPSSSSSSSSS) are enriched in low complexity. 2 stretches are compositionally biased toward polar residues: residues 85–96 (QSAQIACSSPSV) and 107–121 (EGSSSQKEESPSTLQ). One can recognise an MAGE domain in the interval 134-333 (IDEKVTDLVQ…RSFPLWYEEA (200 aa)). Positions 340–369 (RAQDRIATTDDTTAMASASSSATGSFSYPE) are disordered. Residues 348 to 369 (TDDTTAMASASSSATGSFSYPE) are compositionally biased toward low complexity.

In terms of tissue distribution, expressed in many tumors of several types, such as melanoma, head and neck squamous cell carcinoma, lung carcinoma and breast carcinoma, but not in normal tissues except for spermatogonia, spermatocytes and placenta.

It is found in the nucleus. Functionally, not known, though may play a role in embryonal development and tumor transformation or aspects of tumor progression. In Homo sapiens (Human), this protein is Melanoma-associated antigen 10 (MAGEA10).